The primary structure comprises 177 residues: Adenine phosphoribosyltransferase (177 aa).

This sequence belongs to the purine/pyrimidine phosphoribosyltransferase family. As to quaternary structure, homodimer.

It localises to the cytoplasm. The enzyme catalyses AMP + diphosphate = 5-phospho-alpha-D-ribose 1-diphosphate + adenine. Its pathway is purine metabolism; AMP biosynthesis via salvage pathway; AMP from adenine: step 1/1. Functionally, catalyzes a salvage reaction resulting in the formation of AMP, that is energically less costly than de novo synthesis. This is Adenine phosphoribosyltransferase from Anaeromyxobacter sp. (strain Fw109-5).